A 1766-amino-acid chain; its full sequence is MALNTLINNNSWDILPKWIEYNDEHYKFLSRELINVVFPILRETDKQLLLDSIILVINMIHFKFGFGSIDKPDELLWHQLIQNNLLDSRAILNAMLPYINDNAKDDKKHRLRNLEDLYLEKDDRGQYVYTNSQYNRCIRRLETDGKISVFNRPCIREYFLDHLEILLMSIETSANKLYVNWVDVLPVKMSDFDTLDIYKQTVVKLNSYKSSSNQNSNQSNQESNESNQEPNESNQEINQESNRNTFNRIDLINNYIDPNSGLSYQDIYNTISNHLFHEIKNYKWLIYDIVIAEKPVSYLKYLENKFDFDELLEGRMWSQLDKSQTIRFQNQWNSFLNSSDTNDNTVLHHFYFFFSKYHKNSQKLIRQNKLVLNKDPDDEEDIEENVRITPETTQDARRGMSQVPIEEIYLFFSDQLTSFKKTWYFYTIQINKKEYVDSEDNIIITPKNIYNYCKSLVSYTNASGKFTQIPKYWYSLKPEFIEMILIRILDINDPIKNDWTKNNWFNINNYIRKFYPDTKEEDLPVMNYKLHSLIRNNIVDIIFESLIFHGILSNFKPNLTITDNSYIRASIGSTDDNKRTKFKHQQMAKQYFTGKTRTEYETNAYYYLTGQTYDQLKPLRNKTYHNFEKKYFDFLTSEQIWTFTYAMNWVSQLNFYHHYSNNRVLYITGATGVGKSTQVPKLLMYSQKMLDYNSNGKIICTQPRVPPTVENADTISRELGVPIRAYNKLYDKSVFTSNFYVQYKHQKEEHIDRQADYFLRIVTDGTLLEEMIGSPFLTRSIEDPYAVDNLGNQLDWVKTYSTGNVYDIVIVDEAHEHNANMDMILTLARDSIYVNNSTKLVIVSATMDDDEPIYRRYYRRINDNRTYPLSAFIDYNQLDRANMDRRIHISPPGATTQYVIRDFYLTDEESALINEKNFIDYGIKKTIELANSTTNGDILLFMTGQADIHKSIKAINAATPPNIVALGYYSELSEETKELIVKIHQTLASYTRYKEDVELDESEITRRVPKGTYTRAIIIATNVAEASITLKNLKYVVDTGYNKVVVYDPIDGVYDTWTLPISFSSAMQRRGRVGRLSSGDFYALYSLNKVINNKTAYKIADINIKDTMVKLIKSYPNDPFIISPMNDINQISNLVSIVNKRLTNNYVPEDLIYDILNNPRPYYDIINKQYLYIPDLTDISQYYTYYGKSSDIVLDEFDPNKINLSDYLRTNHDDYHFQQNHGAFYSRCYTGYDNYILEDQSLTFYIIHPDENIINRNLYTGQMDSLKIASSIKESYYYYLLKVNNIQEKSDLQRINFRNFQLIKYPLAMSEAELQMLIMNVPAKKSDLVIRYTNIVDSNINSYTEEYYSGLPNVNINDMTRVKSLLLINLGQIQSAVSLNILNNYNNILWYSYAIPYQLNHDVLAIMVMIDLASDINQWIDPSKSRCCLNKFLNQHFNKEGDIKFLWDLWKKIQPILIKNNLLNTNDINYLRSDFNRNKEKYLSEKKIPFNEFLLFDKLFNSGKLNTTDEFYYYVNGINFDFVMENNNVSRMIEILSENELLNKDKIIDFVSQYLSLNFTIYKQMWSHQYEIENKLNENSDNNKDIVEWVDKNLRFPNIITHPYNMPDDWDKILETYIRALSTNVVKNQGSYYLKMNNGVKIFPSRWSRFNPTEKTFLNNKSEFIIYHSNDSTDNKVNIMYLTPVQLKWILDANPIYYYYLIFDKNNIINKLKETDNIKEILQTISSVKPYYSIKSLIEYVDRMNNPTISRLIRSEIYGLDNSTKN.

The tract at residues 209-239 (KSSSNQNSNQSNQESNESNQEPNESNQEINQ) is disordered. Over residues 210–239 (SSSNQNSNQSNQESNESNQEPNESNQEINQ) the composition is skewed to low complexity. The Helicase ATP-binding domain occupies 656-865 (YHHYSNNRVL…RYYRRINDNR (210 aa)). 669–676 (GATGVGKS) contributes to the ATP binding site. The DEAH box motif lies at 812–815 (DEAH). A Helicase C-terminal domain is found at 947–1116 (DIHKSIKAIN…TMVKLIKSYP (170 aa)).

It belongs to the DEAD box helicase family. DEAH subfamily.

It catalyses the reaction ATP + H2O = ADP + phosphate + H(+). This is Putative ATP-dependent RNA helicase R366 from Acanthamoeba polyphaga mimivirus (APMV).